The following is a 457-amino-acid chain: MATLRQVFSISELRQKIFFTFSLLALCRIGVFIPVPGINGDRAVAYFNQLLGSSQNLFQLADIFSGGAFAQMTVIALGVVPYISASIIVQLLVVFMPTLQREMRESPDQGKRKLGRMTRLFTLVLACVQSLLFAKFALRMNLVVPGIVLPAMLSLKLFGVPWVFYLTTVVVMITGTLLLMWVGEQISDKGIGNGISLIITLGILASFPSVLGSIFNKLNLGSQDPSEFGIVSLLILCAVFVFVLMATVLIIEGMRKIPVQHARRIIGRREVVGGGSYLPLKVNYAGVIPVIFASSLLMFPATIGQFLSSESSWLKRIATMLSPGSVAYSIFYVLLIIFFTYFWTATQFRPEQIASEMKKNGAFIPGIRQGKPTQTYLEYTMNRVTLLGAVFLAVVAILPSILGRILRVDANVSYFLGGTAMLIVVGVILDTMKQIDAFLLVRRYDGVLKKDRPKGRP.

The next 10 membrane-spanning stretches (helical) occupy residues 17 to 37, 75 to 95, 118 to 138, 162 to 182, 195 to 215, 230 to 250, 287 to 307, 326 to 346, 386 to 406, and 412 to 432; these read IFFTFSLLALCRIGVFIPVPG, IALGVVPYISASIIVQLLVVF, TRLFTLVLACVQSLLFAKFAL, WVFYLTTVVVMITGTLLLMWV, ISLIITLGILASFPSVLGSIF, IVSLLILCAVFVFVLMATVLI, VIPVIFASSLLMFPATIGQFL, VAYSIFYVLLIIFFTYFWTAT, LLGAVFLAVVAILPSILGRIL, and VSYFLGGTAMLIVVGVILDTM.

This sequence belongs to the SecY/SEC61-alpha family. As to quaternary structure, component of the Sec protein translocase complex. Heterotrimer consisting of SecY, SecE and SecG subunits. The heterotrimers can form oligomers, although 1 heterotrimer is thought to be able to translocate proteins. Interacts with the ribosome. Interacts with SecDF, and other proteins may be involved. Interacts with SecA.

The protein resides in the cell inner membrane. Functionally, the central subunit of the protein translocation channel SecYEG. Consists of two halves formed by TMs 1-5 and 6-10. These two domains form a lateral gate at the front which open onto the bilayer between TMs 2 and 7, and are clamped together by SecE at the back. The channel is closed by both a pore ring composed of hydrophobic SecY resides and a short helix (helix 2A) on the extracellular side of the membrane which forms a plug. The plug probably moves laterally to allow the channel to open. The ring and the pore may move independently. This Chlamydia trachomatis serovar D (strain ATCC VR-885 / DSM 19411 / UW-3/Cx) protein is Protein translocase subunit SecY.